A 295-amino-acid polypeptide reads, in one-letter code: Formamidopyrimidine-DNA glycosylase (295 aa).

Pro-2 acts as the Schiff-base intermediate with DNA in catalysis. Glu-3 (proton donor) is an active-site residue. Lys-61 (proton donor; for beta-elimination activity) is an active-site residue. Positions 95, 117, and 159 each coordinate DNA. Residues 245–279 (HAYGREGEACERCGTPIRRVAFMNRSSYFCPVCQP) form an FPG-type zinc finger. Catalysis depends on Arg-269, which acts as the Proton donor; for delta-elimination activity.

Belongs to the FPG family. As to quaternary structure, monomer. Requires Zn(2+) as cofactor.

It catalyses the reaction Hydrolysis of DNA containing ring-opened 7-methylguanine residues, releasing 2,6-diamino-4-hydroxy-5-(N-methyl)formamidopyrimidine.. The catalysed reaction is 2'-deoxyribonucleotide-(2'-deoxyribose 5'-phosphate)-2'-deoxyribonucleotide-DNA = a 3'-end 2'-deoxyribonucleotide-(2,3-dehydro-2,3-deoxyribose 5'-phosphate)-DNA + a 5'-end 5'-phospho-2'-deoxyribonucleoside-DNA + H(+). Its function is as follows. Involved in base excision repair of DNA damaged by oxidation or by mutagenic agents. Acts as a DNA glycosylase that recognizes and removes damaged bases. Has a preference for oxidized purines, such as 7,8-dihydro-8-oxoguanine (8-oxoG). Has AP (apurinic/apyrimidinic) lyase activity and introduces nicks in the DNA strand. Cleaves the DNA backbone by beta-delta elimination to generate a single-strand break at the site of the removed base with both 3'- and 5'-phosphates. The sequence is that of Formamidopyrimidine-DNA glycosylase from Nocardioides sp. (strain ATCC BAA-499 / JS614).